The chain runs to 219 residues: uncharacterized protein (219 aa).

Over 1–15 (MLKLTTTSVTFHVLR) the chain is Cytoplasmic. A helical transmembrane segment spans residues 16 to 36 (YFQLGLSVTNLLLASFAIITN). Topologically, residues 37–41 (YKVDR) are vacuolar. Residues 42–62 (ILRLSLAVSIISSVYFGIVRF) form a helical membrane-spanning segment. Position 63 (L63) is a topological domain, cytoplasmic. A helical membrane pass occupies residues 64–84 (PVLLIFVMEIVQTVLWFTAFV). Residues 85-116 (TLASKFGSMSCSSMPRGINFDYSGSCKIAKID) are Vacuolar-facing. A helical membrane pass occupies residues 117-137 (ILPEAVLFILFLATTYASYIT). Residues 138–219 (VLSQAKENGS…VIDGSIEHSS (82 aa)) are Cytoplasmic-facing. The interval 176–219 (PLLDLEVQEDARTETESIEDSTDSEDNANIEQEKVIDGSIEHSS) is disordered. The segment covering 191 to 203 (ESIEDSTDSEDNA) has biased composition (acidic residues). Residues 206–219 (EQEKVIDGSIEHSS) are compositionally biased toward basic and acidic residues.

The protein localises to the vacuole membrane. This is an uncharacterized protein from Saccharomyces cerevisiae (strain ATCC 204508 / S288c) (Baker's yeast).